The primary structure comprises 738 residues: Eukaryotic translation initiation factor 3 subunit B (738 aa).

Positions 1-10 are enriched in polar residues; the sequence is MAPSFENLSE. The disordered stretch occupies residues 1–20; the sequence is MAPSFENLSEQDLHEEEEEE. The RRM domain occupies 40 to 126; sequence TFVVIDGLPV…HTLLVNKLMD (87 aa). 6 WD repeats span residues 193–230, 232–289, 301–342, 454–494, 511–554, and 569–607; these read AHWT…KQKQ, PHPF…RSFV, QPKK…LLGK, SLKD…SFFA, IEKK…EKND, and VDHY…HTFS. The segment at 693–720 is disordered; it reads EAYGLPEEADQPKAAKDAPTNTEDKGET. Positions 702–720 are enriched in basic and acidic residues; sequence DQPKAAKDAPTNTEDKGET.

This sequence belongs to the eIF-3 subunit B family. In terms of assembly, component of the eukaryotic translation initiation factor 3 (eIF-3) complex.

The protein localises to the cytoplasm. In terms of biological role, RNA-binding component of the eukaryotic translation initiation factor 3 (eIF-3) complex, which is involved in protein synthesis of a specialized repertoire of mRNAs and, together with other initiation factors, stimulates binding of mRNA and methionyl-tRNAi to the 40S ribosome. The eIF-3 complex specifically targets and initiates translation of a subset of mRNAs involved in cell proliferation. This Emericella nidulans (strain FGSC A4 / ATCC 38163 / CBS 112.46 / NRRL 194 / M139) (Aspergillus nidulans) protein is Eukaryotic translation initiation factor 3 subunit B (prt1).